We begin with the raw amino-acid sequence, 306 residues long: Type 2A encapsulin shell protein SrpI (306 aa).

Belongs to the encapsulin family. Family 2A subfamily. As to quaternary structure, the 24.5 nm encapsulin nanocompartment is formed by 60 subunits; monomers form pentamers which assemble to form shells. There are 12 positively charged pores where the pentamers meet with a minimal pore diameter of 3.7 Angstroms as well 3-fold axis channels and dimer channels.

Its subcellular location is the encapsulin nanocompartment. Its function is as follows. Shell component of a type 2A encapsulin nanocompartment. Expression in E.coli generates nanocompartments with an average diameter of 25 nm. They can be disassembled by treatment with 6M guanidine hydrochloride and reassembled with cargo. The nanocompartment is probably involved in sulfur metabolism. Probably allows passage of cysteine into its interior; during growth in light the physiological pH is 8-8.4, about 30-54% of free cysteine (charge -1) would be able to pass through the shell. The sequence is that of Type 2A encapsulin shell protein SrpI from Synechococcus elongatus (strain ATCC 33912 / PCC 7942 / FACHB-805) (Anacystis nidulans R2).